A 170-amino-acid polypeptide reads, in one-letter code: ATP synthase subunit b (170 aa).

The chain crosses the membrane as a helical span at residues 20–42; the sequence is QLLAMLVLLALLKKFALGPLLNI.

It belongs to the ATPase B chain family. F-type ATPases have 2 components, F(1) - the catalytic core - and F(0) - the membrane proton channel. F(1) has five subunits: alpha(3), beta(3), gamma(1), delta(1), epsilon(1). F(0) has three main subunits: a(1), b(2) and c(10-14). The alpha and beta chains form an alternating ring which encloses part of the gamma chain. F(1) is attached to F(0) by a central stalk formed by the gamma and epsilon chains, while a peripheral stalk is formed by the delta and b chains.

It is found in the cell membrane. F(1)F(0) ATP synthase produces ATP from ADP in the presence of a proton or sodium gradient. F-type ATPases consist of two structural domains, F(1) containing the extramembraneous catalytic core and F(0) containing the membrane proton channel, linked together by a central stalk and a peripheral stalk. During catalysis, ATP synthesis in the catalytic domain of F(1) is coupled via a rotary mechanism of the central stalk subunits to proton translocation. Functionally, component of the F(0) channel, it forms part of the peripheral stalk, linking F(1) to F(0). This is ATP synthase subunit b from Bacillus velezensis (strain DSM 23117 / BGSC 10A6 / LMG 26770 / FZB42) (Bacillus amyloliquefaciens subsp. plantarum).